A 794-amino-acid polypeptide reads, in one-letter code: Sucrose synthase (794 aa).

The interval 263 to 742 (MISRLLILSP…ALDRVASRYT (480 aa)) is GT-B glycosyltransferase.

It belongs to the glycosyltransferase 1 family. Homotetramer.

The catalysed reaction is an NDP-alpha-D-glucose + D-fructose = a ribonucleoside 5'-diphosphate + sucrose + H(+). It catalyses the reaction ADP-alpha-D-glucose + D-fructose = sucrose + ADP + H(+). Inhibited by GDP over 10 mM and by over 2 mM MgCl(2). Catalyzes the reversible conversion of sucrose and a nucleotide disphosphate (NDP) into fructose and NDP-glucose; although the reaction is freely reversible in vitro, the physiological reaction seems to be sucrose cleavage. Unlike characterized plant enzymes prefers ADP as a cosubstrate, whereas plants prefer UDP. The KM for sucrose is 8-fold lower in the presence of ADP than UDP. Its preference for ADP over UDP suggests it may directly link sucrose and glycogen metabolism. The chain is Sucrose synthase (ss2) from Nitrosomonas europaea (strain ATCC 19718 / CIP 103999 / KCTC 2705 / NBRC 14298).